Reading from the N-terminus, the 58-residue chain is Cholecystokinins (58 aa).

Tyrosine 52 carries the post-translational modification Sulfotyrosine. Position 58 is a phenylalanine amide (phenylalanine 58).

It belongs to the gastrin/cholecystokinin family. In terms of assembly, binds to CCK-A receptors in the pancreas and CCK-B receptors in the brain. cholecystokinin 8 binds CCK-A receptors more potently than cholecystokinin 58, cholecystokinin 8 and cholecystokinin 58 bind CCK-B receptors with equal affinity. The precursor is cleaved by proteases to produce a number of active cholecystokinins. Post-translationally, cholecystokinin 58 occurs in both sulfated (CCK58(s)) and nonsulfated (CCK58(ns)) forms, which differ in their receptor-binding activities. CCK58(s) binds to the CCK-A receptor with high affinity, CCK58(ns) binds poorly to the CCK-A receptor. CCK58(s) and CCK58(ns) both bind the CCK-B receptor. In terms of processing, the precursor is cleaved by ACE, which removes the Gly-Arg-Arg peptide at the C-terminus, leading to mature hormone.

The protein resides in the secreted. Functionally, this peptide hormone induces gall bladder contraction and the release of pancreatic enzymes in the gut. Its function in the brain is not clear. Binding to CCK-A receptors stimulates amylase release from the pancreas, binding to CCK-B receptors stimulates gastric acid secretion. cholecystokinin 58 and cholecystokinin 8, but not cholecystokinin 58 desnonopeptide, stimulate amylase release from the pancreas. cholecystokinin 58, but not cholecystokinin 8, increases bile-pancreatic volume. In Canis lupus familiaris (Dog), this protein is Cholecystokinins.